A 414-amino-acid polypeptide reads, in one-letter code: MAMVVSTWRDPQDEVPGSQGSQASQAPPVPGPPPGAPHTPQTPGQGGPASTPAQTAAGSQGGPGGPGSDKQQQQQHIECVVCGDKSSGKHYGQFTCEGCKSFFKRSVRRNLSYTCRANRNCPIDQHHRNQCQYCRLKKCLKVGMRREAVQRGRMPPTQPTHGQFALTNGDPLNCHSYLSGYISLLLRAEPYPTSRFGSQCMQPNNIMGIENICELAARMLFSAVEWARNIPFFPDLQITDQVALLRLTWSELFVLNAAQCSMPLHVAPLLAAAGLHASPMSADRVVAFMDHIRIFQEQVEKLKALHVDSAEYSCLKAIVLFTSDACGLSDVAHVESLQEKSQCALEEYVRSQYPNQPTRFGKLLLRLPSLRTVSSSVIEQLFFVRLVGKTPIETLIRDMLLSGSSFNWPYMAIQ.

A disordered region spans residues 1-72 (MAMVVSTWRD…PGGPGSDKQQ (72 aa)). The segment covering 27–37 (PPVPGPPPGAP) has biased composition (pro residues). The span at 38 to 54 (HTPQTPGQGGPASTPAQ) shows a compositional bias: low complexity. Position 51 is a phosphothreonine (Thr51). The segment at residues 76-151 (HIECVVCGDK…VGMRREAVQR (76 aa)) is a DNA-binding region (nuclear receptor). NR C4-type zinc fingers lie at residues 79 to 99 (CVVCGDKSSGKHYGQFTCEGC) and 115 to 139 (CRANRNCPIDQHHRNQCQYCRLKKC). The interval 117-414 (ANRNCPIDQH…SFNWPYMAIQ (298 aa)) is interaction with ZFPM2. Residues 177 to 403 (YLSGYISLLL…TLIRDMLLSG (227 aa)) form the NR LBD domain. The important for dimerization stretch occupies residues 337 to 414 (LQEKSQCALE…SFNWPYMAIQ (78 aa)).

It belongs to the nuclear hormone receptor family. NR2 subfamily. In terms of assembly, interacts with SQSTM1. Binds DNA as a dimer; homodimer or heterodimer with NR2F6. Interacts with NCOA1, NCOA2, NCOA3 and PPARGC1A. Interacts with ZFPM2.

The protein resides in the nucleus. Its function is as follows. Ligand-activated transcription factor. Activated by high concentrations of 9-cis-retinoic acid and all-trans-retinoic acid, but not by dexamethasone, cortisol or progesterone (in vitro). Regulation of the apolipoprotein A-I gene transcription. Binds to DNA site A. May be required to establish ovary identity during early gonad development. The protein is COUP transcription factor 2 (Nr2f2) of Rattus norvegicus (Rat).